A 181-amino-acid polypeptide reads, in one-letter code: Acireductone dioxygenase (181 aa).

Positions 97, 99, 103, and 141 each coordinate Fe(2+). Positions 97, 99, 103, and 141 each coordinate Ni(2+).

It belongs to the acireductone dioxygenase (ARD) family. Monomer. Fe(2+) is required as a cofactor. Ni(2+) serves as cofactor.

It catalyses the reaction 1,2-dihydroxy-5-(methylsulfanyl)pent-1-en-3-one + O2 = 3-(methylsulfanyl)propanoate + CO + formate + 2 H(+). The catalysed reaction is 1,2-dihydroxy-5-(methylsulfanyl)pent-1-en-3-one + O2 = 4-methylsulfanyl-2-oxobutanoate + formate + 2 H(+). The protein operates within amino-acid biosynthesis; L-methionine biosynthesis via salvage pathway; L-methionine from S-methyl-5-thio-alpha-D-ribose 1-phosphate: step 5/6. Catalyzes 2 different reactions between oxygen and the acireductone 1,2-dihydroxy-3-keto-5-methylthiopentene (DHK-MTPene) depending upon the metal bound in the active site. Fe-containing acireductone dioxygenase (Fe-ARD) produces formate and 2-keto-4-methylthiobutyrate (KMTB), the alpha-ketoacid precursor of methionine in the methionine recycle pathway. Ni-containing acireductone dioxygenase (Ni-ARD) produces methylthiopropionate, carbon monoxide and formate, and does not lie on the methionine recycle pathway. In Pseudomonas paraeruginosa (strain DSM 24068 / PA7) (Pseudomonas aeruginosa (strain PA7)), this protein is Acireductone dioxygenase.